The primary structure comprises 93 residues: Co-chaperonin GroES (93 aa).

It belongs to the GroES chaperonin family. As to quaternary structure, heptamer of 7 subunits arranged in a ring. Interacts with the chaperonin GroEL.

Its subcellular location is the cytoplasm. Together with the chaperonin GroEL, plays an essential role in assisting protein folding. The GroEL-GroES system forms a nano-cage that allows encapsulation of the non-native substrate proteins and provides a physical environment optimized to promote and accelerate protein folding. GroES binds to the apical surface of the GroEL ring, thereby capping the opening of the GroEL channel. The chain is Co-chaperonin GroES from Lacticaseibacillus paracasei (strain ATCC 334 / BCRC 17002 / CCUG 31169 / CIP 107868 / KCTC 3260 / NRRL B-441) (Lactobacillus paracasei).